A 1004-amino-acid chain; its full sequence is Bifunctional glutamine synthetase adenylyltransferase/adenylyl-removing enzyme (1004 aa).

Residues 1–496 (MVRPPSARSA…LHAKLFYRPL (496 aa)) form an adenylyl removase region. An adenylyl transferase region spans residues 502–1004 (RMDPDALRLS…RAVVERVFGS (503 aa)).

This sequence belongs to the GlnE family. Mg(2+) serves as cofactor.

It catalyses the reaction [glutamine synthetase]-O(4)-(5'-adenylyl)-L-tyrosine + phosphate = [glutamine synthetase]-L-tyrosine + ADP. The catalysed reaction is [glutamine synthetase]-L-tyrosine + ATP = [glutamine synthetase]-O(4)-(5'-adenylyl)-L-tyrosine + diphosphate. Functionally, involved in the regulation of glutamine synthetase GlnA, a key enzyme in the process to assimilate ammonia. When cellular nitrogen levels are high, the C-terminal adenylyl transferase (AT) inactivates GlnA by covalent transfer of an adenylyl group from ATP to specific tyrosine residue of GlnA, thus reducing its activity. Conversely, when nitrogen levels are low, the N-terminal adenylyl removase (AR) activates GlnA by removing the adenylyl group by phosphorolysis, increasing its activity. The regulatory region of GlnE binds the signal transduction protein PII (GlnB) which indicates the nitrogen status of the cell. This is Bifunctional glutamine synthetase adenylyltransferase/adenylyl-removing enzyme from Nocardia farcinica (strain IFM 10152).